The sequence spans 223 residues: UPF0502 protein Sde_2426 (223 aa).

The protein belongs to the UPF0502 family.

The chain is UPF0502 protein Sde_2426 from Saccharophagus degradans (strain 2-40 / ATCC 43961 / DSM 17024).